The primary structure comprises 87 residues: Small ribosomal subunit protein bS20 (87 aa).

The protein belongs to the bacterial ribosomal protein bS20 family.

Its function is as follows. Binds directly to 16S ribosomal RNA. The sequence is that of Small ribosomal subunit protein bS20 from Corynebacterium diphtheriae (strain ATCC 700971 / NCTC 13129 / Biotype gravis).